The following is a 190-amino-acid chain: Probable chemoreceptor glutamine deamidase CheD (190 aa).

Belongs to the CheD family.

The catalysed reaction is L-glutaminyl-[protein] + H2O = L-glutamyl-[protein] + NH4(+). In terms of biological role, probably deamidates glutamine residues to glutamate on methyl-accepting chemotaxis receptors (MCPs), playing an important role in chemotaxis. The sequence is that of Probable chemoreceptor glutamine deamidase CheD from Acidiphilium cryptum (strain JF-5).